The sequence spans 162 residues: UPF0262 protein HNE_1347 (162 aa).

It belongs to the UPF0262 family.

The protein is UPF0262 protein HNE_1347 of Hyphomonas neptunium (strain ATCC 15444).